Reading from the N-terminus, the 332-residue chain is Fructose-1,6-bisphosphatase class 1 (332 aa).

Mg(2+) contacts are provided by Glu89, Asp110, Leu112, and Asp113. Substrate is bound by residues 113-116 (DGSS), Asn206, Tyr239, 257-259 (YLY), and Lys269. Glu275 contacts Mg(2+).

The protein belongs to the FBPase class 1 family. As to quaternary structure, homotetramer. Mg(2+) is required as a cofactor.

It localises to the cytoplasm. The enzyme catalyses beta-D-fructose 1,6-bisphosphate + H2O = beta-D-fructose 6-phosphate + phosphate. It functions in the pathway carbohydrate biosynthesis; gluconeogenesis. The protein is Fructose-1,6-bisphosphatase class 1 of Shigella sonnei (strain Ss046).